The chain runs to 263 residues: Complement control protein C3 (263 aa).

Residues 1-19 (MKVESVTFLTLLGIGCVLS) form the signal peptide. 4 Sushi domains span residues 20 to 83 (CCTI…QCIK), 84 to 145 (RRCP…ICES), 146 to 203 (VKCQ…TCQI), and 204 to 263 (VKCP…KCVR). Cystine bridges form between Cys-21–Cys-70, Cys-54–Cys-81, Cys-86–Cys-126, Cys-112–Cys-143, Cys-148–Cys-190, Cys-176–Cys-201, Cys-206–Cys-248, and Cys-234–Cys-261.

This sequence belongs to the receptors of complement activation (RCA) family. Heterodimer with A56 protein; disulfide-linked.

Its subcellular location is the virion membrane. The protein resides in the host cell membrane. The protein localises to the secreted. Its function is as follows. Serves to protect the virus against complement attack by inhibiting both classical and alternative pathways of complement activation. Binds C3b and C4b. This Vaccinia virus (strain Copenhagen) (VACV) protein is Complement control protein C3.